Reading from the N-terminus, the 183-residue chain is Ribosome rescue factor SmrB (183 aa).

The Smr domain occupies leucine 98–glutamate 173.

The protein belongs to the SmrB family. As to quaternary structure, associates with collided ribosomes, but not with correctly translating polysomes.

Its function is as follows. Acts as a ribosome collision sensor. Detects stalled/collided disomes (pairs of ribosomes where the leading ribosome is stalled and a second ribosome has collided with it) and endonucleolytically cleaves mRNA at the 5' boundary of the stalled ribosome. Stalled/collided disomes form a new interface (primarily via the 30S subunits) that binds SmrB. Cleaved mRNA becomes available for tmRNA ligation, leading to ribosomal subunit dissociation and rescue of stalled ribosomes. The chain is Ribosome rescue factor SmrB from Shigella boydii serotype 18 (strain CDC 3083-94 / BS512).